Reading from the N-terminus, the 209-residue chain is Octanoyltransferase (209 aa).

The 180-residue stretch at 30–209 (DNEPEIVYLV…IQTEFNKIFK (180 aa)) folds into the BPL/LPL catalytic domain. Residues 69–76 (RGGKFTFH), 143–145 (AIG), and 156–158 (GVA) contribute to the substrate site. Cysteine 174 acts as the Acyl-thioester intermediate in catalysis.

It belongs to the LipB family.

It localises to the cytoplasm. The enzyme catalyses octanoyl-[ACP] + L-lysyl-[protein] = N(6)-octanoyl-L-lysyl-[protein] + holo-[ACP] + H(+). Its pathway is protein modification; protein lipoylation via endogenous pathway; protein N(6)-(lipoyl)lysine from octanoyl-[acyl-carrier-protein]: step 1/2. Its function is as follows. Catalyzes the transfer of endogenously produced octanoic acid from octanoyl-acyl-carrier-protein onto the lipoyl domains of lipoate-dependent enzymes. Lipoyl-ACP can also act as a substrate although octanoyl-ACP is likely to be the physiological substrate. In Rickettsia felis (strain ATCC VR-1525 / URRWXCal2) (Rickettsia azadi), this protein is Octanoyltransferase.